A 1380-amino-acid chain; its full sequence is DNA-directed RNA polymerase subunit beta (1380 aa).

Belongs to the RNA polymerase beta chain family. In terms of assembly, the RNAP catalytic core consists of 2 alpha, 1 beta, 1 beta' and 1 omega subunit. When a sigma factor is associated with the core the holoenzyme is formed, which can initiate transcription.

It carries out the reaction RNA(n) + a ribonucleoside 5'-triphosphate = RNA(n+1) + diphosphate. Functionally, DNA-dependent RNA polymerase catalyzes the transcription of DNA into RNA using the four ribonucleoside triphosphates as substrates. This Rhizobium meliloti (strain 1021) (Ensifer meliloti) protein is DNA-directed RNA polymerase subunit beta.